We begin with the raw amino-acid sequence, 122 residues long: Large ribosomal subunit protein uL18 (122 aa).

This sequence belongs to the universal ribosomal protein uL18 family. Part of the 50S ribosomal subunit; part of the 5S rRNA/L5/L18/L25 subcomplex. Contacts the 5S and 23S rRNAs.

Functionally, this is one of the proteins that bind and probably mediate the attachment of the 5S RNA into the large ribosomal subunit, where it forms part of the central protuberance. The polypeptide is Large ribosomal subunit protein uL18 (Dictyoglomus turgidum (strain DSM 6724 / Z-1310)).